The sequence spans 149 residues: Cytochrome c-type biogenesis protein CcmE (149 aa).

Residues 1-7 are Cytoplasmic-facing; it reads MTRKQKR. Residues 8 to 28 traverse the membrane as a helical; Signal-anchor for type II membrane protein segment; sequence LAVIAGGVGFIMVAVLLVLFA. Residues 29-149 lie on the Periplasmic side of the membrane; the sequence is FGQSIAYFYM…GVWKGEGEAK (121 aa). H123 and Y127 together coordinate heme.

Belongs to the CcmE/CycJ family.

It is found in the cell inner membrane. Functionally, heme chaperone required for the biogenesis of c-type cytochromes. Transiently binds heme delivered by CcmC and transfers the heme to apo-cytochromes in a process facilitated by CcmF and CcmH. The polypeptide is Cytochrome c-type biogenesis protein CcmE (Allorhizobium ampelinum (strain ATCC BAA-846 / DSM 112012 / S4) (Agrobacterium vitis (strain S4))).